Reading from the N-terminus, the 89-residue chain is UPF0223 protein BCB4264_A4064 (89 aa).

Belongs to the UPF0223 family.

This Bacillus cereus (strain B4264) protein is UPF0223 protein BCB4264_A4064.